The chain runs to 945 residues: LPS-assembly protein LptD (945 aa).

Positions 1 to 33 (MALKSPAFRKKFPLLVTGSLLALQPLATSFVVA) are cleaved as a signal peptide. The segment at 56 to 98 (AQLPPRPVHDANSVSSSVATAADATGEEASGDKSKLVTEAKGR) is disordered. Positions 65–79 (DANSVSSSVATAADA) are enriched in low complexity. The segment covering 85–98 (SGDKSKLVTEAKGR) has biased composition (basic and acidic residues).

The protein belongs to the LptD family. In terms of assembly, component of the lipopolysaccharide transport and assembly complex. Interacts with LptE and LptA.

The protein localises to the cell outer membrane. In terms of biological role, together with LptE, is involved in the assembly of lipopolysaccharide (LPS) at the surface of the outer membrane. This chain is LPS-assembly protein LptD, found in Pseudomonas fluorescens (strain ATCC BAA-477 / NRRL B-23932 / Pf-5).